The primary structure comprises 576 residues: Alpha-1,3-arabinosyltransferase XAT3 (576 aa).

Topologically, residues 1 to 19 (MKAGERPKLVRGVRQESRR) are cytoplasmic. Residues 20 to 40 (FRLLVIVVGFFLVSLTFVFVS) form a helical; Signal-anchor for type II membrane protein membrane-spanning segment. Residues 41–576 (KPDAILFSLN…LLEALDNLNP (536 aa)) are Lumenal-facing. Residues 64-171 (IQQKVNEPSG…KHKVTLPTVS (108 aa)) form a disordered region. 3 stretches are compositionally biased toward basic and acidic residues: residues 73 to 98 (GESRKTSTDALRGDPKVVDDEADAKP), 126 to 138 (THNKDGNGHKSHQ), and 147 to 163 (GESKGNDEEGEHAEQKH). Asn-172, Asn-375, and Asn-443 each carry an N-linked (GlcNAc...) asparagine glycan.

This sequence belongs to the glycosyltransferase 61 family.

It is found in the golgi apparatus membrane. Its pathway is glycan metabolism. Glycosyltransferase involved in the arabinosylation of xylan, the major hemicellulose (non-cellulosic component) of primary and secondary walls of angiosperms. Possesses alpha-1,3-arabinosyltransferase activity, transferring an arabinofuranose residue to the xylan backbone. This Oryza sativa subsp. japonica (Rice) protein is Alpha-1,3-arabinosyltransferase XAT3.